A 742-amino-acid polypeptide reads, in one-letter code: Synaptic vesicle glycoprotein 2A (742 aa).

Residues 1–57 form an interaction with SYT1 region; that stretch reads MEEGFRDRAAFIRGAKDIAKEVKKHAAKKVVKGLDRVQDEYSRRSYSRFEEEDDDDD. The Cytoplasmic portion of the chain corresponds to 1 to 169; that stretch reads MEEGFRDRAA…GHGRFQWTLY (169 aa). Residues 33 to 49 show a composition bias toward basic and acidic residues; it reads GLDRVQDEYSRRSYSRF. The tract at residues 33-144 is disordered; that stretch reads GLDRVQDEYS…GRGEAQRRKE (112 aa). Phosphoserine occurs at positions 80 and 81. Position 84 is a phosphothreonine (threonine 84). Over residues 122–137 the composition is skewed to gly residues; it reads VRGGLSDGEGPPGGRG. Serine 127 carries the post-translational modification Phosphoserine. A helical transmembrane segment spans residues 170–190; that stretch reads FVLGLALMADGVEVFVVGFVL. The Extracellular segment spans residues 191–205; sequence PSAEKDMCLSDSNKG. A helical transmembrane segment spans residues 206–226; it reads MLGLIVYLGMMVGAFLWGGLA. The Cytoplasmic segment spans residues 227–233; that stretch reads DRLGRRQ. Residues 234–254 traverse the membrane as a helical segment; the sequence is CLLISLSVNSVFAFFSSFVQG. At 255-262 the chain is on the extracellular side; that stretch reads YGTFLFCR. The chain crosses the membrane as a helical span at residues 263–283; that stretch reads LLSGVGIGGSIPIVFSYFSEF. The Cytoplasmic segment spans residues 284–294; sequence LAQEKRGEHLS. A helical membrane pass occupies residues 295–315; that stretch reads WLCMFWMIGGVYAAAMAWAII. Topologically, residues 316-334 are extracellular; it reads PHYGWSFQMGSAYQFHSWR. Residues 335-355 form a helical membrane-spanning segment; that stretch reads VFVLVCAFPSVFAIGALTTQP. The Cytoplasmic segment spans residues 356-447; sequence ESPRFFLENG…CFGPEYRRIT (92 aa). Serine 393 carries the phosphoserine modification. Residues 448-468 traverse the membrane as a helical segment; the sequence is LMMMGVWFTMSFSYYGLTVWF. Residues 469–598 lie on the Extracellular side of the membrane; the sequence is PDMIRHLQAV…GTGEGAYMVY (130 aa). Position 480 is a phosphotyrosine (tyrosine 480). Residues asparagine 498, asparagine 548, and asparagine 573 are each glycosylated (N-linked (GlcNAc...) asparagine). A helical transmembrane segment spans residues 599–619; that stretch reads FVSFLGTLAVLPGNIVSALLM. Residues 620–626 are Cytoplasmic-facing; it reads DKIGRLR. A helical membrane pass occupies residues 627–647; it reads MLAGSSVMSCVSCFFLSFGNS. Over 648–651 the chain is Extracellular; the sequence is ESAM. The helical transmembrane segment at 652 to 672 threads the bilayer; sequence IALLCLFGGVSIASWNALDVL. The Cytoplasmic segment spans residues 673–690; that stretch reads TVGLYPSDKRTTAFGFLN. Residues 691–711 traverse the membrane as a helical segment; it reads ALCKLAAVLGISIFTSFVGIT. Position 712 (lysine 712) is a topological domain, extracellular. Residues 713–733 traverse the membrane as a helical segment; that stretch reads AAPIPFASAALALGSSLALKL. Over 734-742 the chain is Cytoplasmic; that stretch reads PETRGQVLQ.

Belongs to the major facilitator superfamily. As to quaternary structure, interacts with SYT1/synaptotagmin-1 in a calcium-dependent manner. Binds the adapter protein complex AP-2. Phosphorylation by CK1 of the N-terminal cytoplasmic domain regulates interaction with SYT1. In terms of processing, N-glycosylated.

The protein localises to the presynapse. It localises to the cytoplasmic vesicle. The protein resides in the secretory vesicle. Its subcellular location is the synaptic vesicle membrane. Its function is as follows. Plays a role in the control of regulated secretion in neural and endocrine cells, enhancing selectively low-frequency neurotransmission. Positively regulates vesicle fusion by maintaining the readily releasable pool of secretory vesicles. The chain is Synaptic vesicle glycoprotein 2A (SV2A) from Macaca fascicularis (Crab-eating macaque).